Reading from the N-terminus, the 991-residue chain is Antigenic heat-stable 120 kDa protein (991 aa).

Disordered regions lie at residues 1 to 37, 54 to 73, and 348 to 384; these read DTSE…TPAL, TPSM…TSDP, and GQSK…TNQP. Over residues 12 to 29 the composition is skewed to basic and acidic residues; sequence EYTEEQKQTEEQEQKEFL. Residues 348–373 are compositionally biased toward polar residues; sequence GQSKEQPLITPQQTTSSSVEPPQYKQ.

It is found in the cytoplasm. This is Antigenic heat-stable 120 kDa protein (sca4) from Rickettsia sibirica.